Here is a 315-residue protein sequence, read N- to C-terminus: Lipase 3 (315 aa).

The N-terminal stretch at 1 to 18 (MLLKRLGLAALFSLSMVG) is a signal peptide. Cys-19 is lipidated: N-palmitoyl cysteine. Cys-19 is lipidated: S-diacylglycerol cysteine. The region spanning 69-296 (PLLLIHGFGG…MNDVGHVPMV (228 aa)) is the AB hydrolase-1 domain. Residue His-74 is part of the active site. Ser-142 functions as the Charge relay system in the catalytic mechanism.

It belongs to the lipase/esterase LIP3/BchO family.

It localises to the cell membrane. It carries out the reaction a triacylglycerol + H2O = a diacylglycerol + a fatty acid + H(+). This is Lipase 3 (lip3) from Moraxella sp. (strain TA144).